Here is a 301-residue protein sequence, read N- to C-terminus: Probable alpha-L-glutamate ligase (301 aa).

An ATP-grasp domain is found at 104–287 (LQLLSRKGIG…VAGMIIQYLE (184 aa)). Residues Lys-141, 178 to 179 (EY), Asp-187, and 211 to 213 (RSN) contribute to the ATP site. 3 residues coordinate Mg(2+): Asp-248, Glu-260, and Asn-262. Asp-248, Glu-260, and Asn-262 together coordinate Mn(2+).

It belongs to the RimK family. The cofactor is Mg(2+). Mn(2+) serves as cofactor.

This Ectopseudomonas mendocina (strain ymp) (Pseudomonas mendocina) protein is Probable alpha-L-glutamate ligase.